Reading from the N-terminus, the 782-residue chain is Beta-mannosyltransferase 9 (782 aa).

Topologically, residues 1 to 26 are cytoplasmic; sequence MEKLIQSTISLFISLSLKISTKSYKS. Residues 27 to 47 traverse the membrane as a helical segment; that stretch reads IISILFIISLLSIILTTTITV. At 48 to 782 the chain is on the extracellular side; it reads YHDPERIITT…GKDKGKDKSN (735 aa). Residues 66 to 96 are disordered; sequence KSVFTASSPKQQDKLQQEIDQHQSDNSHEQQ. Residues 76–96 are compositionally biased toward basic and acidic residues; the sequence is QQDKLQQEIDQHQSDNSHEQQ. N-linked (GlcNAc...) asparagine glycosylation is found at N445, N648, and N699.

Belongs to the BMT family.

It localises to the membrane. Its function is as follows. Beta-mannosyltransferase involved in cell wall biosynthesis through beta-1,2-mannosylation of cell wall phosphopeptidomannan. The sequence is that of Beta-mannosyltransferase 9 (BMT9) from Candida albicans (strain SC5314 / ATCC MYA-2876) (Yeast).